The sequence spans 169 residues: Ferric-chelate reductase (NAD(P)H) (169 aa).

Y7 contributes to the NADP(+) binding site. Residues 27-31, 45-52, 82-84, and K89 each bind FMN; these read QIANT, CLNKENDT, and RKS. NADP(+) is bound by residues H126 and 147–154; that span reads YADYHLMK.

The protein belongs to the non-flavoprotein flavin reductase family. In terms of assembly, homodimer. Requires FMN as cofactor. It depends on FAD as a cofactor.

It carries out the reaction 2 a Fe(II)-siderophore + NAD(+) + H(+) = 2 a Fe(III)-siderophore + NADH. The enzyme catalyses 2 a Fe(II)-siderophore + NADP(+) + H(+) = 2 a Fe(III)-siderophore + NADPH. Catalyzes the reduction of bound ferric iron (Fe(3+)) in a variety of iron chelators (siderophores) using NAD(P)H as the electron donor, resulting in the release of Fe(2+). Not active with uncomplexed Fe(3+). Also reduces FMN and FAD, but not riboflavin. In Archaeoglobus fulgidus (strain ATCC 49558 / DSM 4304 / JCM 9628 / NBRC 100126 / VC-16), this protein is Ferric-chelate reductase (NAD(P)H).